Reading from the N-terminus, the 339-residue chain is D-erythrose-4-phosphate dehydrogenase (339 aa).

Residue 11–12 (RI) participates in NAD(+) binding. Substrate is bound by residues 153–155 (SCT), arginine 199, 212–213 (TK), and arginine 235. Cysteine 154 functions as the Nucleophile in the catalytic mechanism. Asparagine 317 serves as a coordination point for NAD(+).

It belongs to the glyceraldehyde-3-phosphate dehydrogenase family. Epd subfamily. Homotetramer.

Its subcellular location is the cytoplasm. It carries out the reaction D-erythrose 4-phosphate + NAD(+) + H2O = 4-phospho-D-erythronate + NADH + 2 H(+). It participates in cofactor biosynthesis; pyridoxine 5'-phosphate biosynthesis; pyridoxine 5'-phosphate from D-erythrose 4-phosphate: step 1/5. In terms of biological role, catalyzes the NAD-dependent conversion of D-erythrose 4-phosphate to 4-phosphoerythronate. This is D-erythrose-4-phosphate dehydrogenase from Shewanella pealeana (strain ATCC 700345 / ANG-SQ1).